A 502-amino-acid chain; its full sequence is CDP-diacylglycerol--glycerol-3-phosphate 3-phosphatidyltransferase (502 aa).

ATP is bound at residue 58-65; it reads STLYIGKE. 2 PLD phosphodiesterase domains span residues 143–169 and 410–443; these read GWGL…SRDY and KGNT…TSRS. Catalysis depends on residues histidine 148, lysine 150, and aspartate 155.

This sequence belongs to the CDP-alcohol phosphatidyltransferase class-II family.

It is found in the mitochondrion. The catalysed reaction is a CDP-1,2-diacyl-sn-glycerol + sn-glycerol 3-phosphate = a 1,2-diacyl-sn-glycero-3-phospho-(1'-sn-glycero-3'-phosphate) + CMP + H(+). It participates in phospholipid metabolism; phosphatidylglycerol biosynthesis; phosphatidylglycerol from CDP-diacylglycerol: step 1/2. Functions in the biosynthesis of the anionic phospholipids phosphatidylglycerol and cardiolipin. The chain is CDP-diacylglycerol--glycerol-3-phosphate 3-phosphatidyltransferase (pgs1) from Schizosaccharomyces pombe (strain 972 / ATCC 24843) (Fission yeast).